A 157-amino-acid polypeptide reads, in one-letter code: MEKVPMTLRGEQMLRTELERLLKLRPQISEAIAEARELGDLKENAEYHAAREEQGICEAQIRDIEYKLSVAQVIDVTKMENTGKVIFGSTVTLIDVDTDEEKTYQIVGDDEADIKAGRISVSSPIARGLIGKMEGDEVAIQTPGGAKDFEIDRVEYI.

A coiled-coil region spans residues 17-37 (ELERLLKLRPQISEAIAEARE).

It belongs to the GreA/GreB family.

Its function is as follows. Necessary for efficient RNA polymerase transcription elongation past template-encoded arresting sites. The arresting sites in DNA have the property of trapping a certain fraction of elongating RNA polymerases that pass through, resulting in locked ternary complexes. Cleavage of the nascent transcript by cleavage factors such as GreA or GreB allows the resumption of elongation from the new 3'terminus. GreA releases sequences of 2 to 3 nucleotides. The protein is Transcription elongation factor GreA of Vibrio parahaemolyticus serotype O3:K6 (strain RIMD 2210633).